The following is a 581-amino-acid chain: Mitosis inhibitor protein kinase mik1 (581 aa).

2 disordered regions span residues 43–71 (GHEENQSHKSSKLTFFKPSNTKRSPHTPM) and 148–178 (NLTNPRSEQPHTPCKKGTKIKLKPPQSPLSP). Residues 59-71 (KPSNTKRSPHTPM) are compositionally biased toward polar residues. A compositionally biased stretch (basic residues) spans 160–169 (PCKKGTKIKL). The 273-residue stretch at 289-561 (FQQVKPIHES…LLAMPEMIFI (273 aa)) folds into the Protein kinase domain. Residues 295–303 (IHESDFSFV) and K320 each bind ATP. D417 acts as the Proton acceptor in catalysis. 2 residues coordinate Mg(2+): N422 and D435.

Belongs to the protein kinase superfamily. Ser/Thr protein kinase family. WEE1 subfamily.

It carries out the reaction L-seryl-[protein] + ATP = O-phospho-L-seryl-[protein] + ADP + H(+). The catalysed reaction is L-threonyl-[protein] + ATP = O-phospho-L-threonyl-[protein] + ADP + H(+). In terms of biological role, protein kinase that acts both on serines and on tyrosines. It acts as a negative regulator of entry into mitosis (G2 to M transition). Phosphorylates and inhibits cdc2. This is Mitosis inhibitor protein kinase mik1 (mik1) from Schizosaccharomyces pombe (strain 972 / ATCC 24843) (Fission yeast).